The following is a 418-amino-acid chain: Actin-related protein 3B (418 aa).

The protein belongs to the actin family. ARP3 subfamily. As to quaternary structure, interacts with the Arp2/3 complex composed of ARP2, ARP3, ARPC1B, ARPC1B/p41-ARC, ARPC2/p34-ARC, ARPC3/p21-ARC, ARPC4/p20-ARC and ARPC5/p16-ARC.

Its subcellular location is the cytoplasm. It localises to the cytoskeleton. It is found in the cell projection. Its function is as follows. Plays a role in the organization of the actin cytoskeleton. May function as ATP-binding component of the Arp2/3 complex which is involved in regulation of actin polymerization and together with an activating nucleation-promoting factor (NPF) mediates the formation of branched actin networks. May decrease the metastatic potential of tumors. This is Actin-related protein 3B (Actr3b) from Mus musculus (Mouse).